The following is a 453-amino-acid chain: Ribulose bisphosphate carboxylase large chain (453 aa).

Residues 1 to 2 (MS) constitute a propeptide that is removed on maturation. The residue at position 3 (P3) is an N-acetylproline. At K14 the chain carries N6,N6,N6-trimethyllysine. Substrate is bound by residues N123 and T173. Residue K175 is the Proton acceptor of the active site. K177 contacts substrate. K201, D203, and E204 together coordinate Mg(2+). K201 bears the N6-carboxylysine mark. H294 serves as the catalytic Proton acceptor. Residues R295, H327, and S379 each contribute to the substrate site.

This sequence belongs to the RuBisCO large chain family. Type I subfamily. In terms of assembly, heterohexadecamer of 8 large chains and 8 small chains; disulfide-linked. The disulfide link is formed within the large subunit homodimers. The cofactor is Mg(2+). In terms of processing, the disulfide bond which can form in the large chain dimeric partners within the hexadecamer appears to be associated with oxidative stress and protein turnover.

It localises to the plastid. The protein localises to the chloroplast. It catalyses the reaction 2 (2R)-3-phosphoglycerate + 2 H(+) = D-ribulose 1,5-bisphosphate + CO2 + H2O. The enzyme catalyses D-ribulose 1,5-bisphosphate + O2 = 2-phosphoglycolate + (2R)-3-phosphoglycerate + 2 H(+). Its function is as follows. RuBisCO catalyzes two reactions: the carboxylation of D-ribulose 1,5-bisphosphate, the primary event in carbon dioxide fixation, as well as the oxidative fragmentation of the pentose substrate in the photorespiration process. Both reactions occur simultaneously and in competition at the same active site. The chain is Ribulose bisphosphate carboxylase large chain from Galium elongatum (Great marsh bedstraw).